The following is a 187-amino-acid chain: UPF0301 protein Cpha266_0885 (187 aa).

It belongs to the UPF0301 (AlgH) family.

The polypeptide is UPF0301 protein Cpha266_0885 (Chlorobium phaeobacteroides (strain DSM 266 / SMG 266 / 2430)).